The following is a 388-amino-acid chain: Basigin (388 aa).

Positions 1 to 21 are cleaved as a signal peptide; it reads MAAGADVPCAVLALLVLGSLA. Residues 27–323 are Extracellular-facing; sequence TAGFIKSPLS…SGSATVNLRV (297 aa). The region spanning 43–131 is the Ig-like domain; sequence DSVELHCEAV…NHLSKSPKVK (89 aa). 2 disulfides stabilise this stretch: cysteine 49/cysteine 113 and cysteine 162/cysteine 211. The Ig-like C2-type domain maps to 143-218; the sequence is ERPVITGQYS…YECIYNTNPV (76 aa). 5 N-linked (GlcNAc...) asparagine glycosylation sites follow: asparagine 163, asparagine 222, asparagine 280, asparagine 286, and asparagine 307. The 95-residue stretch at 229-323 folds into the Ig-like V-type domain; sequence PQVVAYKKSE…SGSATVNLRV (95 aa). Residues cysteine 250 and cysteine 306 are joined by a disulfide bond. Residues 324-344 form a helical membrane-spanning segment; the sequence is RSRLAALWPFLGIVAEVLVLV. Residues 345 to 388 are Cytoplasmic-facing; that stretch reads TIIFIYEKRRKPDEVLDDDDGGSAPLKSNATNHKDKNVRQRNAN. Positions 358 to 388 are disordered; that stretch reads EVLDDDDGGSAPLKSNATNHKDKNVRQRNAN.

In terms of assembly, interacts with NXNL1, SLC2A1 and SLC16A1. Post-translationally, N-glycosylated. Retinal cone photoreceptors (at protein level). In terms of tissue distribution, brain endothelial cells, kidney epithelial cells and erythroblasts (at protein level).

The protein resides in the cell membrane. Its subcellular location is the photoreceptor inner segment. The protein localises to the cell projection. It is found in the cilium. It localises to the photoreceptor outer segment. The protein resides in the endoplasmic reticulum membrane. Its subcellular location is the basolateral cell membrane. Its function is as follows. Essential for normal retinal maturation and development. Acts as a retinal cell surface receptor for NXNL1 and plays an important role in NXNL1-mediated survival of retinal cone photoreceptors. In association with glucose transporter SLC16A1/GLUT1 and NXNL1, promotes retinal cone survival by enhancing aerobic glycolysis and accelerating the entry of glucose into photoreceptors. In terms of biological role, signaling receptor for cyclophilins, essential for PPIA/CYPA and PPIB/CYPB-dependent signaling related to chemotaxis and adhesion of immune cells. Plays an important role in targeting the monocarboxylate transporters SLC16A1/GLUT1, SLC16A3, SLC16A8, SLC16A11 and SLC16A12 to the plasma membrane. Acts as a coreceptor for vascular endothelial growth factor receptor 2 (KDR/VEGFR2) in endothelial cells enhancing its VEGFA-mediated activation and downstream signaling. Promotes angiogenesis through EPAS1/HIF2A-mediated up-regulation of VEGFA and KDR/VEGFR2 in endothelial cells. The chain is Basigin (BSG) from Gallus gallus (Chicken).